A 342-amino-acid chain; its full sequence is Platelet-activating factor receptor (342 aa).

Over Met-1–Thr-16 the chain is Extracellular. N-linked (GlcNAc...) asparagine glycosylation occurs at Asn-4. The helical transmembrane segment at Leu-17–Trp-38 threads the bilayer. The Cytoplasmic portion of the chain corresponds to Val-39 to Ile-54. Residues Phe-55 to Ile-74 form a helical membrane-spanning segment. The Extracellular segment spans residues Val-75–Asn-91. Cys-90 and Cys-173 are disulfide-bonded. A helical transmembrane segment spans residues Leu-92–Tyr-113. Over Asn-114–Arg-133 the chain is Cytoplasmic. Residues Gly-134–Leu-155 traverse the membrane as a helical segment. Residues Asp-156 to Val-184 lie on the Extracellular side of the membrane. N-linked (GlcNAc...) asparagine glycosylation occurs at Asn-169. The helical transmembrane segment at Leu-185–Cys-205 threads the bilayer. Over Asn-206–Met-233 the chain is Cytoplasmic. The chain crosses the membrane as a helical span at residues Val-234–Pro-254. Topologically, residues Trp-255–Gln-276 are extracellular. Residues Val-277–Leu-296 traverse the membrane as a helical segment. The Cytoplasmic portion of the chain corresponds to Thr-297–Tyr-342.

It belongs to the G-protein coupled receptor 1 family. As to quaternary structure, interacts with ARRB1.

It is found in the cell membrane. Receptor for platelet activating factor, a chemotactic phospholipid mediator that possesses potent inflammatory, smooth-muscle contractile and hypotensive activity. Seems to mediate its action via a G protein that activates a phosphatidylinositol-calcium second messenger system. The sequence is that of Platelet-activating factor receptor from Capra hircus (Goat).